Consider the following 109-residue polypeptide: Nucleoid-associated protein LJ_0424 (109 aa).

It belongs to the YbaB/EbfC family. Homodimer.

It localises to the cytoplasm. It is found in the nucleoid. In terms of biological role, binds to DNA and alters its conformation. May be involved in regulation of gene expression, nucleoid organization and DNA protection. The chain is Nucleoid-associated protein LJ_0424 from Lactobacillus johnsonii (strain CNCM I-12250 / La1 / NCC 533).